Here is a 291-residue protein sequence, read N- to C-terminus: 33 kDa chaperonin (291 aa).

2 disulfides stabilise this stretch: Cys-237–Cys-239 and Cys-270–Cys-273.

This sequence belongs to the HSP33 family. Post-translationally, under oxidizing conditions two disulfide bonds are formed involving the reactive cysteines. Under reducing conditions zinc is bound to the reactive cysteines and the protein is inactive.

It is found in the cytoplasm. Redox regulated molecular chaperone. Protects both thermally unfolding and oxidatively damaged proteins from irreversible aggregation. Plays an important role in the bacterial defense system toward oxidative stress. This chain is 33 kDa chaperonin, found in Bacillus cytotoxicus (strain DSM 22905 / CIP 110041 / 391-98 / NVH 391-98).